A 348-amino-acid chain; its full sequence is NFSTPLNEHEEVSYESAGYTVLRILPLVVLGVTFVLGVLGNGLVIWVAGFRMTRTVTTICYLNLALADFSFTATLPFLIVSMAMGEKWPFGWFLCKLIHIVVDINLFGSVFLIGFIALDRCICVLHPVWAQNHRTVSLAMKVIVGPWILALVLTLPVFLFLTTVTIPNGDTYCTFNFASWGGTPEERQKVAITMLTARGIIRFVIGFSLPMSIVAICYGLIAAKIHKKGMIKSSRPLRVLTAVVASFFICWFPFQLVALLGTVWLKEMLFYGKYKIIDILVNPTSSLAFFNSCLNPMLYVFVGQDFRERLIHSLPTSLERALSEDSAPTNDTAASCASPPAETELQAM.

An N-linked (GlcNAc...) asparagine glycan is attached at Asn-1. At 1 to 24 (NFSTPLNEHEEVSYESAGYTVLRI) the chain is on the extracellular side. A helical membrane pass occupies residues 25-47 (LPLVVLGVTFVLGVLGNGLVIWV). Residues 48–58 (AGFRMTRTVTT) lie on the Cytoplasmic side of the membrane. Residues 59 to 80 (ICYLNLALADFSFTATLPFLIV) traverse the membrane as a helical segment. The Extracellular portion of the chain corresponds to 81 to 97 (SMAMGEKWPFGWFLCKL). Cys-95 and Cys-173 form a disulfide bridge. Residues 98 to 118 (IHIVVDINLFGSVFLIGFIAL) traverse the membrane as a helical segment. The Cytoplasmic segment spans residues 119-137 (DRCICVLHPVWAQNHRTVS). The chain crosses the membrane as a helical span at residues 138–159 (LAMKVIVGPWILALVLTLPVFL). The Extracellular portion of the chain corresponds to 160 to 202 (FLTTVTIPNGDTYCTFNFASWGGTPEERQKVAITMLTARGIIR). The helical transmembrane segment at 203–223 (FVIGFSLPMSIVAICYGLIAA) threads the bilayer. At 224–239 (KIHKKGMIKSSRPLRV) the chain is on the cytoplasmic side. A helical transmembrane segment spans residues 240–263 (LTAVVASFFICWFPFQLVALLGTV). The Extracellular segment spans residues 264–283 (WLKEMLFYGKYKIIDILVNP). Residues 284–303 (TSSLAFFNSCLNPMLYVFVG) traverse the membrane as a helical segment. Over 304-348 (QDFRERLIHSLPTSLERALSEDSAPTNDTAASCASPPAETELQAM) the chain is Cytoplasmic. Residues 323-348 (SEDSAPTNDTAASCASPPAETELQAM) form a disordered region. Positions 326–335 (SAPTNDTAAS) are enriched in polar residues.

Belongs to the G-protein coupled receptor 1 family. Interacts with APP; the interaction takes place at the cell surface and the complex is then rapidly internalized.

The protein resides in the cell membrane. Functionally, low affinity receptor for N-formyl-methionyl peptides, which are powerful neutrophil chemotactic factors. Binding of FMLP to the receptor causes activation of neutrophils. This response is mediated via a G-protein that activates a phosphatidylinositol-calcium second messenger system. Receptor for the chemokine-like protein FAM19A5, mediating FAM19A5-stimulated macrophage chemotaxis and the inhibitory effect on TNFSF11/RANKL-induced osteoclast differentiation. The protein is N-formyl peptide receptor 2 (FPR2) of Gorilla gorilla gorilla (Western lowland gorilla).